A 392-amino-acid chain; its full sequence is Large ribosomal subunit protein uL3 (392 aa).

It belongs to the universal ribosomal protein uL3 family.

The protein localises to the cytoplasm. The L3 protein is a component of the large subunit of cytoplasmic ribosomes. The sequence is that of Large ribosomal subunit protein uL3 (rpl3) from Aspergillus fumigatus (strain ATCC MYA-4609 / CBS 101355 / FGSC A1100 / Af293) (Neosartorya fumigata).